A 38-amino-acid polypeptide reads, in one-letter code: Large ribosomal subunit protein bL36 (38 aa).

This sequence belongs to the bacterial ribosomal protein bL36 family.

This Buchnera aphidicola subsp. Acyrthosiphon pisum (strain 5A) protein is Large ribosomal subunit protein bL36.